Here is a 116-residue protein sequence, read N- to C-terminus: Protein TCL1B1 (116 aa).

It belongs to the TCL1 family.

In Mus musculus (Mouse), this protein is Protein TCL1B1 (Tcl1b1).